The chain runs to 470 residues: Ubiquitin carboxyl-terminal hydrolase calypso (470 aa).

In terms of domain architecture, UCH catalytic spans 43 to 274 (GWLELESDPG…IRFNLMAVVP (232 aa)). The Nucleophile role is filled by Cys-129. Residue His-211 is the Proton donor of the active site. Residues 305-324 (DEQGEGGNGDPQRPDTPSTL) form a disordered region. The ULD domain maps to 373–401 (NYDKFICTFLSMLAHQGVLGELVSQHLLP). Residues 403–470 (KKISGQSAAN…KGRNKCKKRK (68 aa)) form a positively charged C-terminal tail required for binding nucleosomes region. Low complexity predominate over residues 422–451 (ANAGATAAGAAGAAPKSQQQQAAAAKNGKS). Positions 422 to 470 (ANAGATAAGAAGAAPKSQQQQAAAAKNGKSPSKTPGRRRKGRNKCKKRK) are disordered. The segment covering 456–470 (PGRRRKGRNKCKKRK) has biased composition (basic residues).

This sequence belongs to the peptidase C12 family. BAP1 subfamily. In terms of assembly, catalytic component of the polycomb repressive deubiquitinase (PR-DUB) complex, at least composed of caly/calypso, Asx and sba (MBD5/6 homolog). The PR-DUB complex associates with nucleosomes to mediate deubiquitination of histone H2AK118ub1 substrates; the association requires the positively charged C-terminal tail of caly, probably due to direct binding of DNA. Interacts (via ULD domain) with Asx (via DEUBAD domain); the interaction produces a stable heterodimer with a composite binding site for ubiquitin. Homodimerizes (via coiled-coil hinge-region between the UCH and ULD domains) to mediate assembly of 2 copies of the caly-Asx heterodimer into a bisymmetric tetramer; dimerization enhances PR-DUB association with nucleosomes.

The protein resides in the nucleus. It carries out the reaction Thiol-dependent hydrolysis of ester, thioester, amide, peptide and isopeptide bonds formed by the C-terminal Gly of ubiquitin (a 76-residue protein attached to proteins as an intracellular targeting signal).. Functionally, catalytic component of the polycomb repressive deubiquitinase (PR-DUB) complex, a complex that specifically mediates deubiquitination of histone H2A monoubiquitinated at 'Lys-119' (H2AK118ub1). Mediates bisymmetric organization of the PR-DUB complex and is involved in association with nucleosomes to mediate deubiquitination. Does not deubiquitinate monoubiquitinated histone H2B. Required to maintain the transcriptionally repressive state of homeotic genes throughout development. The PR-DUB complex has weak or no activity toward 'Lys-48'- and 'Lys-63'-linked polyubiquitin chains. Polycomb group (PcG) protein. The polypeptide is Ubiquitin carboxyl-terminal hydrolase calypso (Drosophila ananassae (Fruit fly)).